Consider the following 304-residue polypeptide: Undecaprenyl-diphosphatase (304 aa).

Transmembrane regions (helical) follow at residues 1-21 (MSLLAAVFLGVLQAATEFLPV), 54-74 (TTLAVLVYFRTEILSLLAAGL), 90-110 (LAWFIVLGTVPAAVLGKLFEE), 114-134 (ALGNWVIAGSLVVLGLVLLAA), 192-212 (FLLSVPIILGAGGYKLWKTVP), 225-245 (LVGTAVSAVAGYLVIDWLLGW), and 253-273 (LFVVWRIAAGVALAILIWQGV).

Belongs to the UppP family.

It is found in the cell inner membrane. The catalysed reaction is di-trans,octa-cis-undecaprenyl diphosphate + H2O = di-trans,octa-cis-undecaprenyl phosphate + phosphate + H(+). Functionally, catalyzes the dephosphorylation of undecaprenyl diphosphate (UPP). Confers resistance to bacitracin. This is Undecaprenyl-diphosphatase from Anaeromyxobacter sp. (strain Fw109-5).